The following is a 160-amino-acid chain: Putative pre-16S rRNA nuclease (160 aa).

The protein belongs to the YqgF nuclease family.

The protein resides in the cytoplasm. Functionally, could be a nuclease involved in processing of the 5'-end of pre-16S rRNA. This is Putative pre-16S rRNA nuclease from Jannaschia sp. (strain CCS1).